Reading from the N-terminus, the 166-residue chain is Small ribosomal subunit protein uS5 (166 aa).

The S5 DRBM domain occupies 11 to 74; sequence LQEKLVAVNR…EQARRNMVKV (64 aa).

Belongs to the universal ribosomal protein uS5 family. As to quaternary structure, part of the 30S ribosomal subunit. Contacts proteins S4 and S8.

Functionally, with S4 and S12 plays an important role in translational accuracy. In terms of biological role, located at the back of the 30S subunit body where it stabilizes the conformation of the head with respect to the body. This chain is Small ribosomal subunit protein uS5, found in Tolumonas auensis (strain DSM 9187 / NBRC 110442 / TA 4).